Reading from the N-terminus, the 61-residue chain is Protein translocase subunit SecE (61 aa).

Residues 39–59 traverse the membrane as a helical segment; sequence LGILVIGLVGMLIRIIGILML.

This sequence belongs to the SecE/SEC61-gamma family. Component of the Sec protein translocase complex. Heterotrimer consisting of SecY (alpha), SecG (beta) and SecE (gamma) subunits. The heterotrimers can form oligomers, although 1 heterotrimer is thought to be able to translocate proteins. Interacts with the ribosome. May interact with SecDF, and other proteins may be involved.

It is found in the cell membrane. Its function is as follows. Essential subunit of the Sec protein translocation channel SecYEG. Clamps together the 2 halves of SecY. May contact the channel plug during translocation. The chain is Protein translocase subunit SecE from Pyrococcus horikoshii (strain ATCC 700860 / DSM 12428 / JCM 9974 / NBRC 100139 / OT-3).